The primary structure comprises 612 residues: DNA mismatch repair protein MutL (612 aa).

Belongs to the DNA mismatch repair MutL/HexB family.

Its function is as follows. This protein is involved in the repair of mismatches in DNA. It is required for dam-dependent methyl-directed DNA mismatch repair. May act as a 'molecular matchmaker', a protein that promotes the formation of a stable complex between two or more DNA-binding proteins in an ATP-dependent manner without itself being part of a final effector complex. The protein is DNA mismatch repair protein MutL of Herminiimonas arsenicoxydans.